Reading from the N-terminus, the 155-residue chain is Small ribosomal subunit protein uS9 (155 aa).

The protein belongs to the universal ribosomal protein uS9 family.

This is Small ribosomal subunit protein uS9 from Rhizobium johnstonii (strain DSM 114642 / LMG 32736 / 3841) (Rhizobium leguminosarum bv. viciae).